The sequence spans 175 residues: ATP synthase subunit b (175 aa).

A helical membrane pass occupies residues 20–40; that stretch reads LIFWTAVTFVIVLLILKQLAW.

It belongs to the ATPase B chain family. In terms of assembly, F-type ATPases have 2 components, F(1) - the catalytic core - and F(0) - the membrane proton channel. F(1) has five subunits: alpha(3), beta(3), gamma(1), delta(1), epsilon(1). F(0) has four main subunits: a(1), b(2) and c(10-14). The alpha and beta chains form an alternating ring which encloses part of the gamma chain. F(1) is attached to F(0) by a central stalk formed by the gamma and epsilon chains, while a peripheral stalk is formed by the delta and b chains.

The protein resides in the cell inner membrane. Functionally, f(1)F(0) ATP synthase produces ATP from ADP in the presence of a proton or sodium gradient. F-type ATPases consist of two structural domains, F(1) containing the extramembraneous catalytic core and F(0) containing the membrane proton channel, linked together by a central stalk and a peripheral stalk. During catalysis, ATP synthesis in the catalytic domain of F(1) is coupled via a rotary mechanism of the central stalk subunits to proton translocation. Component of the F(0) channel, it forms part of the peripheral stalk, linking F(1) to F(0). The chain is ATP synthase subunit b from Chlorobium limicola (strain DSM 245 / NBRC 103803 / 6330).